The following is a 373-amino-acid chain: sn-glycerol-3-phosphate import ATP-binding protein UgpC 2 (373 aa).

An ABC transporter domain is found at 4–234 (IDIRQVRKSY…PASTFVASFI (231 aa)). Position 36-43 (36-43 (GPSGCGKS)) interacts with ATP.

Belongs to the ABC transporter superfamily. sn-glycerol-3-phosphate importer (TC 3.A.1.1.3) family. In terms of assembly, the complex is composed of two ATP-binding proteins (UgpC), two transmembrane proteins (UgpA and UgpE) and a solute-binding protein (UgpB).

The protein resides in the cell inner membrane. The catalysed reaction is sn-glycerol 3-phosphate(out) + ATP + H2O = sn-glycerol 3-phosphate(in) + ADP + phosphate + H(+). Functionally, part of the ABC transporter complex UgpBAEC involved in sn-glycerol-3-phosphate (G3P) import. Responsible for energy coupling to the transport system. In Agrobacterium fabrum (strain C58 / ATCC 33970) (Agrobacterium tumefaciens (strain C58)), this protein is sn-glycerol-3-phosphate import ATP-binding protein UgpC 2.